The sequence spans 120 residues: V-type proton ATPase subunit F (120 aa).

It belongs to the V-ATPase F subunit family. As to quaternary structure, V-ATPase is a heteromultimeric enzyme composed of a peripheral catalytic V1 complex (components A to H) attached to an integral membrane V0 proton pore complex (components: a, c, c', c'', d, e, f and VOA1).

It is found in the vacuole membrane. In terms of biological role, subunit of the V1 complex of vacuolar(H+)-ATPase (V-ATPase), a multisubunit enzyme composed of a peripheral complex (V1) that hydrolyzes ATP and a membrane integral complex (V0) that translocates protons. V-ATPase is responsible for acidifying and maintaining the pH of intracellular compartments. This is V-type proton ATPase subunit F from Schizosaccharomyces pombe (strain 972 / ATCC 24843) (Fission yeast).